The primary structure comprises 736 residues: MFKKTILSFVISAVMVTAASAVENEQPKSNQFWWPNQLDLTPLRNHSDESNPQNSNFDYAEAFEKLDLEAVKKDIDKVLTNSQDWWPADYGHYGPFFIRMAWHAAGTYRTHDGRGGAGGGQQRFDPLNSWPDNVNLDKARRLLWPIKQKYGQSISWADLIALTGNVALESMGFKTYGYAGGREDDWEPDLVYWGPESKFLTDERRDKKGKLKGPLAAVEMGLIYVNPVGPHGNPDPLLAANDIRMSFGRMAMNDEEIVALIAGGHTFGKAHGAKKPTECVGPEPAAAAVEEQGFGWKNRCGTGSGADTTSSGLEGAWTITPTQWTTNYLDNLFTFNWVKTKSPAGAIQWIPDTDTAANLVPDAHDPTKRHAPIMFTTDIAIKEDPKFRAIAESFRKSPDKYELAFAKAWFKLNHRDLGPRSRYLGNEVPKEVLVWQDPIPELNHPVVNDADIAKLKSEILKSGLSVQDLVLTAWASASSYRGTDMRGGANGARINLSPQNEWQVNNPKQLAKVLNKLEKIKDKFNKKSKKAKISLADLIVLGGAAAIEKSVKEAGFNNKVPFTPGRMDASQAMTDVASFGVLESTADGFRNYYSDESNLSPAQMLIDKADLLTLTVPEMTALVGGMRALSANADGSNHGVFTDQPGVLSNDFFVNLLDMSVKWSKKPKSEALYEGYDRKTGKLKWTATPVDLVFGSNTELRAISEFYASKNAEEQFITDFIAAWHKVMVNDRFDIK.

A signal peptide spans 1–21; sequence MFKKTILSFVISAVMVTAASA. The segment at residues 102–224 is a cross-link (tryptophyl-tyrosyl-methioninium (Trp-Tyr) (with M-250)); that stretch reads WHAAGTYRTH…LAAVEMGLIY (123 aa). His-103 acts as the Proton acceptor in catalysis. The tryptophyl-tyrosyl-methioninium (Tyr-Met) (with W-102) cross-link spans 224-250; it reads YVNPVGPHGNPDPLLAANDIRMSFGRM. Residue His-265 participates in heme b binding.

It belongs to the peroxidase family. Peroxidase/catalase subfamily. In terms of assembly, homodimer or homotetramer. Requires heme b as cofactor. Post-translationally, formation of the three residue Trp-Tyr-Met cross-link is important for the catalase, but not the peroxidase activity of the enzyme.

It carries out the reaction H2O2 + AH2 = A + 2 H2O. The enzyme catalyses 2 H2O2 = O2 + 2 H2O. Bifunctional enzyme with both catalase and broad-spectrum peroxidase activity. The protein is Catalase-peroxidase of Shewanella woodyi (strain ATCC 51908 / MS32).